Reading from the N-terminus, the 181-residue chain is Crossover junction endodeoxyribonuclease RuvC (181 aa).

Residues D8, E67, and D139 contribute to the active site. Mg(2+) contacts are provided by D8, E67, and D139.

This sequence belongs to the RuvC family. Homodimer which binds Holliday junction (HJ) DNA. The HJ becomes 2-fold symmetrical on binding to RuvC with unstacked arms; it has a different conformation from HJ DNA in complex with RuvA. In the full resolvosome a probable DNA-RuvA(4)-RuvB(12)-RuvC(2) complex forms which resolves the HJ. Requires Mg(2+) as cofactor.

The protein localises to the cytoplasm. The catalysed reaction is Endonucleolytic cleavage at a junction such as a reciprocal single-stranded crossover between two homologous DNA duplexes (Holliday junction).. Its function is as follows. The RuvA-RuvB-RuvC complex processes Holliday junction (HJ) DNA during genetic recombination and DNA repair. Endonuclease that resolves HJ intermediates. Cleaves cruciform DNA by making single-stranded nicks across the HJ at symmetrical positions within the homologous arms, yielding a 5'-phosphate and a 3'-hydroxyl group; requires a central core of homology in the junction. The consensus cleavage sequence is 5'-(A/T)TT(C/G)-3'. Cleavage occurs on the 3'-side of the TT dinucleotide at the point of strand exchange. HJ branch migration catalyzed by RuvA-RuvB allows RuvC to scan DNA until it finds its consensus sequence, where it cleaves and resolves the cruciform DNA. The sequence is that of Crossover junction endodeoxyribonuclease RuvC from Acinetobacter baumannii (strain SDF).